The following is a 97-amino-acid chain: Co-chaperonin GroES (97 aa).

Belongs to the GroES chaperonin family. In terms of assembly, heptamer of 7 subunits arranged in a ring. Interacts with the chaperonin GroEL.

Its subcellular location is the cytoplasm. In terms of biological role, together with the chaperonin GroEL, plays an essential role in assisting protein folding. The GroEL-GroES system forms a nano-cage that allows encapsulation of the non-native substrate proteins and provides a physical environment optimized to promote and accelerate protein folding. GroES binds to the apical surface of the GroEL ring, thereby capping the opening of the GroEL channel. This Pseudomonas fluorescens (strain Pf0-1) protein is Co-chaperonin GroES.